We begin with the raw amino-acid sequence, 1070 residues long: Phosphatidylinositol 4,5-bisphosphate 3-kinase catalytic subunit beta isoform (1070 aa).

Residues 26–115 form the PI3K-ABD domain; the sequence is SDGSISVDFL…LPVLKLVTRS (90 aa). The PI3K-RBD domain maps to 194–285; sequence GGKLVVAVHF…RTLPHFILVE (92 aa). Residue serine 324 is modified to Phosphoserine. A C2 PI3K-type domain is found at 327-496; the sequence is WGNNNPFQIV…NATALHIKFP (170 aa). The short motif at 410 to 418 is the Nuclear localization signal (NLS) element; the sequence is KVKTKKSTK. A PIK helical domain is found at 524–701; it reads ANVSSRGGKK…GVILEAYCRG (178 aa). A PI3K/PI4K catalytic domain is found at 772 to 1053; the sequence is YVEKCRYMDS…KFDEALRESW (282 aa). A G-loop region spans residues 778-784; the sequence is YMDSKMK. The segment at 916-924 is catalytic loop; sequence GIGDRHSDN. Positions 935-961 are activation loop; that stretch reads HIDFGHILGNFKSKFGIKRERVPFILT. Serine 1070 is modified (phosphoserine; by autocatalysis).

This sequence belongs to the PI3/PI4-kinase family. In terms of assembly, heterodimer of a catalytic subunit PIK3CB and a p85 regulatory subunit (PIK3R1, PIK3R2 or PIK3R3). Interaction with PIK3R2 is required for nuclear localization and nuclear export. Part of a complex with PIK3R1 and PTEN. Binding to PTEN may antagonize the lipid kinase activity under normal growth conditions. Part of a complex involved in autophagosome formation composed of PIK3C3 and PIK3R4. Interacts with BECN1, ATG14 and RAB5A. Autophosphorylation at Ser-1070 negatively regulates the phosphatidylinositol-4,5-bisphosphate 3-kinase activity.

The protein resides in the cytoplasm. It is found in the nucleus. The catalysed reaction is a 1,2-diacyl-sn-glycero-3-phospho-(1D-myo-inositol-4,5-bisphosphate) + ATP = a 1,2-diacyl-sn-glycero-3-phospho-(1D-myo-inositol-3,4,5-trisphosphate) + ADP + H(+). It catalyses the reaction 1-octadecanoyl-2-(5Z,8Z,11Z,14Z)-eicosatetraenoyl-sn-glycero-3-phospho-1D-myo-inositol 4,5-bisphosphate + ATP = 1-octadecanoyl-2-(5Z,8Z,11Z,14Z-eicosatetraenoyl)-sn-glycero-3-phospho-(1D-myo-inositol 3,4,5-triphosphate) + ADP + H(+). It carries out the reaction L-seryl-[protein] + ATP = O-phospho-L-seryl-[protein] + ADP + H(+). It functions in the pathway phospholipid metabolism; phosphatidylinositol phosphate biosynthesis. Phosphoinositide-3-kinase (PI3K) phosphorylates phosphatidylinositol (PI) derivatives at position 3 of the inositol ring to produce 3-phosphoinositides. Uses ATP and PtdIns(4,5)P2 (phosphatidylinositol 4,5-bisphosphate) to generate phosphatidylinositol 3,4,5-trisphosphate (PIP3). PIP3 plays a key role by recruiting PH domain-containing proteins to the membrane, including AKT1 and PDPK1, activating signaling cascades involved in cell growth, survival, proliferation, motility and morphology. Involved in the activation of AKT1 upon stimulation by G-protein coupled receptors (GPCRs) ligands such as CXCL12, sphingosine 1-phosphate, and lysophosphatidic acid. May also act downstream receptor tyrosine kinases. Required in different signaling pathways for stable platelet adhesion and aggregation. Plays a role in platelet activation signaling triggered by GPCRs, alpha-IIb/beta-3 integrins (ITGA2B/ ITGB3) and ITAM (immunoreceptor tyrosine-based activation motif)-bearing receptors such as GP6. Regulates the strength of adhesion of ITGA2B/ ITGB3 activated receptors necessary for the cellular transmission of contractile forces. Required for platelet aggregation induced by F2 (thrombin) and thromboxane A2 (TXA2). Has a role in cell survival. May have a role in cell migration. Involved in the early stage of autophagosome formation. Modulates the intracellular level of PtdIns3P (phosphatidylinositol 3-phosphate) and activates PIK3C3 kinase activity. May act as a scaffold, independently of its lipid kinase activity to positively regulate autophagy. May have a role in insulin signaling as scaffolding protein in which the lipid kinase activity is not required. May have a kinase-independent function in regulating cell proliferation and in clathrin-mediated endocytosis. Mediator of oncogenic signal in cell lines lacking PTEN. The lipid kinase activity is necessary for its role in oncogenic transformation. Required for the growth of ERBB2 and RAS driven tumors. Also has a protein kinase activity showing autophosphorylation. The protein is Phosphatidylinositol 4,5-bisphosphate 3-kinase catalytic subunit beta isoform (Pik3cb) of Rattus norvegicus (Rat).